The chain runs to 485 residues: MSQVSRRKVLFVTSELADLVKTGGLGDVSAALPRAMRHLHDVRVLIPGYPQVINSGNPIHIISQLGGHAALPPCKVGRMDMKDGLVIYVLICPELYEREGTPYADSDGRDWSDNHIRFARLGLAAAEFAAGEVKSQWCPELVHAHDWPAGLAPAYMRWRGQSTPSIFTIHNLAYQGTVSTASSRELGIPDEAITPEGMEFYGKLSFIKAGMAFASHITTVSATYAREITTPEFGCGLEGFLQSKANKGQLSGIPNGIDESWDAATDEHLICHFAPNEWTRKEINADYVRELFELDASTGPLYAVVSRLVYQKGLDLTIGVAEHIVNNGGQIAIIGRGEPEEEDAMRELAARFPGRIGVRIGFNETDARRMFAGSDFLLMPSRYEPCGLSQMYAQRFGSLPVARNTGGLADTIEDGVTGFLFKESTIESYTEALNRTFQVFAHRELLNAMRCRAMAAPFNWHQAVEPYADLYRDLLKKNVSISSNY.

K21 lines the ADP-alpha-D-glucose pocket.

Belongs to the glycosyltransferase 1 family. Bacterial/plant glycogen synthase subfamily.

The enzyme catalyses [(1-&gt;4)-alpha-D-glucosyl](n) + ADP-alpha-D-glucose = [(1-&gt;4)-alpha-D-glucosyl](n+1) + ADP + H(+). The protein operates within glycan biosynthesis; glycogen biosynthesis. Synthesizes alpha-1,4-glucan chains using ADP-glucose. The protein is Glycogen synthase of Pseudomonas savastanoi pv. phaseolicola (strain 1448A / Race 6) (Pseudomonas syringae pv. phaseolicola (strain 1448A / Race 6)).